The sequence spans 169 residues: Large ribosomal subunit protein uL10 (169 aa).

This sequence belongs to the universal ribosomal protein uL10 family. Part of the ribosomal stalk of the 50S ribosomal subunit. The N-terminus interacts with L11 and the large rRNA to form the base of the stalk. The C-terminus forms an elongated spine to which L12 dimers bind in a sequential fashion forming a multimeric L10(L12)X complex.

Forms part of the ribosomal stalk, playing a central role in the interaction of the ribosome with GTP-bound translation factors. This is Large ribosomal subunit protein uL10 from Onion yellows phytoplasma (strain OY-M).